Reading from the N-terminus, the 550-residue chain is Arginine--tRNA ligase (550 aa).

Positions 125-135 match the 'HIGH' region motif; the sequence is ANPTGPLHIGH.

The protein belongs to the class-I aminoacyl-tRNA synthetase family. As to quaternary structure, monomer.

The protein resides in the cytoplasm. The enzyme catalyses tRNA(Arg) + L-arginine + ATP = L-arginyl-tRNA(Arg) + AMP + diphosphate. The sequence is that of Arginine--tRNA ligase from Lawsonia intracellularis (strain PHE/MN1-00).